A 275-amino-acid polypeptide reads, in one-letter code: Phosphonoacetaldehyde hydrolase (275 aa).

The active-site Nucleophile is Asp15. Mg(2+) is bound by residues Asp15 and Ala17. The Schiff-base intermediate with substrate role is filled by Lys56. Residue Asp189 participates in Mg(2+) binding.

It belongs to the HAD-like hydrolase superfamily. PhnX family. As to quaternary structure, homodimer. Requires Mg(2+) as cofactor.

The catalysed reaction is phosphonoacetaldehyde + H2O = acetaldehyde + phosphate + H(+). Involved in phosphonate degradation. This Pseudomonas fluorescens (strain SBW25) protein is Phosphonoacetaldehyde hydrolase.